The following is a 133-amino-acid chain: FK506-binding protein 2 (133 aa).

An N-terminal signal peptide occupies residues 1–20 (MKLLYCLLLVILALVGLSSG). The PPIase FKBP-type domain occupies 45–133 (GDKLKIHYTG…IFDVELIGIN (89 aa)).

This sequence belongs to the FKBP-type PPIase family.

The catalysed reaction is [protein]-peptidylproline (omega=180) = [protein]-peptidylproline (omega=0). With respect to regulation, inhibited by both FK506 and rapamycin. In terms of biological role, PPIases accelerate the folding of proteins by catalyzing the cis-trans isomerization of proline imidic peptide bonds in oligopeptides. The sequence is that of FK506-binding protein 2 (fkbp2) from Dictyostelium discoideum (Social amoeba).